Here is a 160-residue protein sequence, read N- to C-terminus: MHLVLLAIGTRMPAWVTEGFNEYQKRMPPDMRLTLEEIPMPKRGKGDAGSQIRAEADALRKRLETIVKKSPGAKTVALEVNGRALDTHALSRKLGELKDVGQDLVLLVGGPDGLCPELSASAHERWSLSNLTLPHPLVRVLLAEQLYRGWTLLTGHPYHR.

S-adenosyl-L-methionine-binding positions include leucine 78, glycine 109, and 128–133 (LSNLTL).

Belongs to the RNA methyltransferase RlmH family. As to quaternary structure, homodimer.

The protein resides in the cytoplasm. It catalyses the reaction pseudouridine(1915) in 23S rRNA + S-adenosyl-L-methionine = N(3)-methylpseudouridine(1915) in 23S rRNA + S-adenosyl-L-homocysteine + H(+). Specifically methylates the pseudouridine at position 1915 (m3Psi1915) in 23S rRNA. This Alcanivorax borkumensis (strain ATCC 700651 / DSM 11573 / NCIMB 13689 / SK2) protein is Ribosomal RNA large subunit methyltransferase H.